Consider the following 289-residue polypeptide: MACVDEPPEKHCWVCFATEKEDRAAEWVSPCRCKGCTKWIHQSCLQRWLDEKQKGNSGGAVSCPQCGTEYRIVFPKMGPVVYFLQQVDRALSRASPFAAAGVVVGTVYWSAVTYGAVTVMQVVGHKKGLDVMERADPLFLLMGLPTIPVMLVLGKMIRWEDYVVRLWQRHSAKLQIFSGLVPGMGRALPRVPVEGSYGGDHLSVSRTLCGALIFPSIANLVGRLLFRRVTSNLQRTILGGIAFVVMKGVLKVYFKQQQYLIQANRHILNYPEPEGQADGATEDEDSSNE.

The RING-CH-type zinc finger occupies 4 to 73; sequence VDEPPEKHCW…PQCGTEYRIV (70 aa). Zn(2+)-binding residues include C12, C15, C31, C33, H41, C44, C63, and C66. The next 4 membrane-spanning stretches (helical) occupy residues 97–117, 137–157, 202–222, and 236–256; these read FAAA…YGAV, PLFL…GKMI, LSVS…NLVG, and TILG…YFKQ.

Its subcellular location is the mitochondrion outer membrane. It is found in the endoplasmic reticulum membrane. The enzyme catalyses S-ubiquitinyl-[E2 ubiquitin-conjugating enzyme]-L-cysteine + [acceptor protein]-L-lysine = [E2 ubiquitin-conjugating enzyme]-L-cysteine + N(6)-ubiquitinyl-[acceptor protein]-L-lysine.. It functions in the pathway protein modification; protein ubiquitination. In terms of biological role, mitochondrial E3 ubiquitin-protein ligase that plays a crucial role in the control of mitochondrial morphology by acting as a positive regulator of mitochondrial fission. May play a role in the prevention of cell senescence acting as a regulator of mitochondrial quality control. The chain is E3 ubiquitin-protein ligase MARCHF5 (marchf5) from Danio rerio (Zebrafish).